A 289-amino-acid chain; its full sequence is Protease HtpX (289 aa).

A run of 2 helical transmembrane segments spans residues 7-27 and 38-58; these read LFLLTNLAITFVLGIVLNIIF and GGILVMSLVFGFAGSLISLFM. His144 lines the Zn(2+) pocket. Glu145 is an active-site residue. His148 contacts Zn(2+). 2 consecutive transmembrane segments (helical) span residues 155–175 and 194–214; these read VTMTLLQGVLNTFVIFLSRII and LVFWIVDIALQMIFGVIATMI. Glu223 is a Zn(2+) binding site.

It belongs to the peptidase M48B family. Requires Zn(2+) as cofactor.

It is found in the cell inner membrane. In Actinobacillus pleuropneumoniae serotype 5b (strain L20), this protein is Protease HtpX.